Consider the following 348-residue polypeptide: Rhodopsin (348 aa).

Met1 bears the N-acetylmethionine mark. Over Met1–Gln36 the chain is Extracellular. Residues Asn2 and Asn15 are each glycosylated (N-linked (GlcNAc...) asparagine). The chain crosses the membrane as a helical span at residues Phe37–Val61. Residues Thr62 to Asn73 are Cytoplasmic-facing. Residues Tyr74–Tyr96 traverse the membrane as a helical segment. The Extracellular portion of the chain corresponds to Thr97–Cys110. Cys110 and Cys187 are joined by a disulfide. The chain crosses the membrane as a helical span at residues Asn111 to Ile133. The 'Ionic lock' involved in activated form stabilization signature appears at Glu134–Tyr136. Residues Glu134–His152 are Cytoplasmic-facing. The chain crosses the membrane as a helical span at residues Ala153–Val173. The Extracellular portion of the chain corresponds to Gly174–Ser202. Glu201 contributes to the Zn(2+) binding site. The chain crosses the membrane as a helical span at residues Phe203–Gly224. The Cytoplasmic portion of the chain corresponds to Gln225–Arg252. Residues Met253 to Tyr274 traverse the membrane as a helical segment. Residues Ile275 to Ile286 lie on the Extracellular side of the membrane. Gln279 serves as a coordination point for Zn(2+). A helical transmembrane segment spans residues Phe287–Met308. Lys296 is modified (N6-(retinylidene)lysine). At Met309–Ala348 the chain is on the cytoplasmic side. Residues Cys322 and Cys323 are each lipidated (S-palmitoyl cysteine). An interaction with SAG region spans residues Asp330–Ala348. A Phosphoserine modification is found at Ser334. Thr336 bears the Phosphothreonine mark. The residue at position 338 (Ser338) is a Phosphoserine. A phosphothreonine mark is found at Thr340 and Thr342. The residue at position 343 (Ser343) is a Phosphoserine.

Belongs to the G-protein coupled receptor 1 family. Opsin subfamily. In terms of assembly, homodimer. May form a complex composed of RHO, GRK1 and RCVRN in a Ca(2+)-dependent manner; RCVRN prevents the interaction between GRK1 and RHO. Interacts with GRK1. Interacts (phosphorylated form) with SAG. Interacts with GNAT1. Interacts with GNAT3. SAG and G-proteins compete for a common binding site. Interacts with PRCD; the interaction promotes PRCD stability. Forms a complex with ASAP1 and ARF4. Forms a complex with ASAP1, RAB11A, Rabin8/RAB3IP, ARF4 and RAB11FIP3; the complex regulates Golgi-to-cilia rhodopsin/RHO transport in photoreceptors. In terms of processing, phosphorylated on some or all of the serine and threonine residues present in the C-terminal region. Post-translationally, contains one covalently linked retinal chromophore. Upon light absorption, the covalently bound 11-cis-retinal is converted to all-trans-retinal. After hydrolysis of the Schiff base and release of the covalently bound all-trans-retinal, active rhodopsin is regenerated by binding of a fresh molecule of 11-cis-retinal.

The protein resides in the membrane. It localises to the cell projection. Its subcellular location is the cilium. It is found in the photoreceptor outer segment. Photoreceptor required for image-forming vision at low light intensity. Required for photoreceptor cell viability after birth. Light-induced isomerization of 11-cis to all-trans retinal triggers a conformational change that activates signaling via G-proteins. Subsequent receptor phosphorylation mediates displacement of the bound G-protein alpha subunit by the arrestin SAG and terminates signaling. This is Rhodopsin (RHO) from Cricetulus griseus (Chinese hamster).